Reading from the N-terminus, the 254-residue chain is Protein odd-skipped-related 2 (254 aa).

3 consecutive C2H2-type zinc fingers follow at residues 124–146 (FICK…ERTH), 152–174 (YSCD…KYIH), and 180–202 (FKCE…RATH).

This sequence belongs to the Odd C2H2-type zinc-finger protein family.

The protein localises to the nucleus. Functionally, may function as transcription regulator. Required for morphogenesis and function of the digestive tract. This chain is Protein odd-skipped-related 2, found in Caenorhabditis elegans.